A 608-amino-acid polypeptide reads, in one-letter code: Protein Spindly (608 aa).

At methionine 1 the chain carries N-acetylmethionine. Positions 1-445 (MEADITNLRN…LKLKYEPEER (445 aa)) form a coiled coil. The interval 465–487 (PEETEETAAASATEDGVSRLPPH) is disordered. Residues serine 516, serine 518, and serine 558 each carry the phosphoserine modification.

This sequence belongs to the Spindly family. Interacts with KNTC1 and ZW10. These interactions appear weak and may be transient or indirect. Interacts with dynein intermediate chain and dynactin (DCTN1). Interacts with the catalytically active form of USP45. Post-translationally, monoubiquitinated with'Lys-48' linkage. Deubiquitinated by USP45.

The protein localises to the cytoplasm. Its subcellular location is the cytoskeleton. The protein resides in the microtubule organizing center. It localises to the centrosome. It is found in the chromosome. The protein localises to the centromere. Its subcellular location is the kinetochore. The protein resides in the nucleus. It localises to the spindle pole. Functionally, required for the localization of dynein and dynactin to the mitotic kintochore. Dynein is believed to control the initial lateral interaction between the kinetochore and spindle microtubules and to facilitate the subsequent formation of end-on kinetochore-microtubule attachments mediated by the NDC80 complex. Also required for correct spindle orientation. Does not appear to be required for the removal of spindle assembly checkpoint (SAC) proteins from the kinetochore upon bipolar spindle attachment. Acts as an adapter protein linking the dynein motor complex to various cargos and converts dynein from a non-processive to a highly processive motor in the presence of dynactin. Facilitates the interaction between dynein and dynactin and activates dynein processivity (the ability to move along a microtubule for a long distance without falling off the track). Plays a role in cell migration. This chain is Protein Spindly (Spdl1), found in Mus musculus (Mouse).